The following is a 239-amino-acid chain: Serine protease SplF (239 aa).

A signal peptide spans 1-36; that stretch reads MNKNIIIKSIAALTILTSITGVGTTVVDGIQQTAKA. Residues H75, D114, and S192 each act as charge relay system in the active site.

The protein belongs to the peptidase S1B family.

It is found in the secreted. This is Serine protease SplF (splF) from Staphylococcus aureus (strain JH9).